The sequence spans 555 residues: CTP synthase (555 aa).

The interval 1-265 (MTRYIFITGG…GNRVCEKLNI (265 aa)) is amidoligase domain. S13 contributes to the CTP binding site. A UTP-binding site is contributed by S13. ATP contacts are provided by residues 14–19 (SLGKGI) and D71. Mg(2+) is bound by residues D71 and E139. CTP is bound by residues 146–148 (DIE), 186–191 (KTKPTQ), and K222. Residues 186-191 (KTKPTQ) and K222 each bind UTP. Positions 290–541 (TVAVVGKYVD…IKAGLAAKEA (252 aa)) constitute a Glutamine amidotransferase type-1 domain. G351 contacts L-glutamine. C378 acts as the Nucleophile; for glutamine hydrolysis in catalysis. L-glutamine is bound by residues 379 to 382 (LGMQ), E402, and R469. Catalysis depends on residues H514 and E516.

It belongs to the CTP synthase family. In terms of assembly, homotetramer.

It carries out the reaction UTP + L-glutamine + ATP + H2O = CTP + L-glutamate + ADP + phosphate + 2 H(+). It catalyses the reaction L-glutamine + H2O = L-glutamate + NH4(+). The enzyme catalyses UTP + NH4(+) + ATP = CTP + ADP + phosphate + 2 H(+). It participates in pyrimidine metabolism; CTP biosynthesis via de novo pathway; CTP from UDP: step 2/2. With respect to regulation, allosterically activated by GTP, when glutamine is the substrate; GTP has no effect on the reaction when ammonia is the substrate. The allosteric effector GTP functions by stabilizing the protein conformation that binds the tetrahedral intermediate(s) formed during glutamine hydrolysis. Inhibited by the product CTP, via allosteric rather than competitive inhibition. Catalyzes the ATP-dependent amination of UTP to CTP with either L-glutamine or ammonia as the source of nitrogen. Regulates intracellular CTP levels through interactions with the four ribonucleotide triphosphates. In Coxiella burnetii (strain CbuK_Q154) (Coxiella burnetii (strain Q154)), this protein is CTP synthase.